Reading from the N-terminus, the 310-residue chain is GTPase Era (310 aa).

The region spanning 17–184 (RSGFVALIGA…MDYLAERLPE (168 aa)) is the Era-type G domain. The G1 stretch occupies residues 25–32 (GATNAGKS). 25–32 (GATNAGKS) serves as a coordination point for GTP. Residues 51–55 (QTTRA) form a G2 region. The G3 stretch occupies residues 72-75 (DTPG). GTP-binding positions include 72-76 (DTPGI) and 134-137 (NKVD). The interval 134–137 (NKVD) is G4. The tract at residues 163–165 (ISA) is G5. The KH type-2 domain occupies 215–292 (LHQELPYASH…HLFLFVKVRE (78 aa)).

The protein belongs to the TRAFAC class TrmE-Era-EngA-EngB-Septin-like GTPase superfamily. Era GTPase family. In terms of assembly, monomer.

The protein localises to the cytoplasm. The protein resides in the cell inner membrane. An essential GTPase that binds both GDP and GTP, with rapid nucleotide exchange. Plays a role in 16S rRNA processing and 30S ribosomal subunit biogenesis and possibly also in cell cycle regulation and energy metabolism. This chain is GTPase Era, found in Sinorhizobium medicae (strain WSM419) (Ensifer medicae).